The following is a 66-amino-acid chain: Large ribosomal subunit protein bL35 (66 aa).

2 stretches are compositionally biased toward basic residues: residues 1–16 and 23–45; these read MPKFKTHRASAKRFKR and KRSHAYTSHRFHGKTKKQRRQLR. The interval 1 to 66 is disordered; sequence MPKFKTHRAS…RIRQMLSGLK (66 aa).

This sequence belongs to the bacterial ribosomal protein bL35 family.

The sequence is that of Large ribosomal subunit protein bL35 from Latilactobacillus sakei subsp. sakei (strain 23K) (Lactobacillus sakei subsp. sakei).